The following is an 84-amino-acid chain: Large ribosomal subunit protein uL29 (84 aa).

Belongs to the universal ribosomal protein uL29 family.

In Mycoplasma mobile (strain ATCC 43663 / 163K / NCTC 11711) (Mesomycoplasma mobile), this protein is Large ribosomal subunit protein uL29.